The primary structure comprises 122 residues: MARLAGVDLPRNKRMEVALTYIYGIGPARSKQLLEETGISPDLRTDNLTDEQIAALRDVIEGTWKVEGDLRRQVQADIRRKIEIGCYQGIRHRRGLPVRGQRTKTNARTRKGPKKTIAGKKK.

The segment at Gly-95–Lys-122 is disordered.

It belongs to the universal ribosomal protein uS13 family. In terms of assembly, part of the 30S ribosomal subunit. Forms a loose heterodimer with protein S19. Forms two bridges to the 50S subunit in the 70S ribosome.

Located at the top of the head of the 30S subunit, it contacts several helices of the 16S rRNA. In the 70S ribosome it contacts the 23S rRNA (bridge B1a) and protein L5 of the 50S subunit (bridge B1b), connecting the 2 subunits; these bridges are implicated in subunit movement. Contacts the tRNAs in the A and P-sites. The polypeptide is Small ribosomal subunit protein uS13 (Corynebacterium glutamicum (strain ATCC 13032 / DSM 20300 / JCM 1318 / BCRC 11384 / CCUG 27702 / LMG 3730 / NBRC 12168 / NCIMB 10025 / NRRL B-2784 / 534)).